Here is a 119-residue protein sequence, read N- to C-terminus: Ribosome-binding factor A (119 aa).

The protein belongs to the RbfA family. In terms of assembly, monomer. Binds 30S ribosomal subunits, but not 50S ribosomal subunits or 70S ribosomes.

The protein resides in the cytoplasm. In terms of biological role, one of several proteins that assist in the late maturation steps of the functional core of the 30S ribosomal subunit. Associates with free 30S ribosomal subunits (but not with 30S subunits that are part of 70S ribosomes or polysomes). Required for efficient processing of 16S rRNA. May interact with the 5'-terminal helix region of 16S rRNA. The protein is Ribosome-binding factor A of Citrifermentans bemidjiense (strain ATCC BAA-1014 / DSM 16622 / JCM 12645 / Bem) (Geobacter bemidjiensis).